Reading from the N-terminus, the 163-residue chain is Protein LOL5 (163 aa).

2 stretches are compositionally biased toward polar residues: residues 1–25 and 33–44; these read MSQLPLASQATTTDLVSTTAMQPQS and LQPQHPPSSTAH. A disordered region spans residues 1–51; it reads MSQLPLASQATTTDLVSTTAMQPQSEGIVDESLQPQHPPSSTAHDSPCLQD. Putative zinc finger regions lie at residues 70 to 100 and 108 to 138; these read QMVCGSCRILLAYFRGAGYVHCTCCQTMNYV and KVHCGHCATLLMYPFGAPAVKCSLCLFVTEI.

The protein resides in the nucleus. Involved in plant growth and disease resistance. The sequence is that of Protein LOL5 (LOL5) from Oryza sativa subsp. japonica (Rice).